The chain runs to 243 residues: Pyridoxine 5'-phosphate synthase (243 aa).

A 3-amino-2-oxopropyl phosphate-binding site is contributed by asparagine 9. Residue aspartate 11 to histidine 12 coordinates 1-deoxy-D-xylulose 5-phosphate. Arginine 20 contacts 3-amino-2-oxopropyl phosphate. Histidine 45 functions as the Proton acceptor in the catalytic mechanism. Residues arginine 47 and histidine 52 each contribute to the 1-deoxy-D-xylulose 5-phosphate site. The active-site Proton acceptor is glutamate 72. A 1-deoxy-D-xylulose 5-phosphate-binding site is contributed by threonine 102. The Proton donor role is filled by histidine 193. Residues glycine 194 and glycine 215–histidine 216 contribute to the 3-amino-2-oxopropyl phosphate site.

The protein belongs to the PNP synthase family. As to quaternary structure, homooctamer; tetramer of dimers.

The protein localises to the cytoplasm. The enzyme catalyses 3-amino-2-oxopropyl phosphate + 1-deoxy-D-xylulose 5-phosphate = pyridoxine 5'-phosphate + phosphate + 2 H2O + H(+). Its pathway is cofactor biosynthesis; pyridoxine 5'-phosphate biosynthesis; pyridoxine 5'-phosphate from D-erythrose 4-phosphate: step 5/5. Its function is as follows. Catalyzes the complicated ring closure reaction between the two acyclic compounds 1-deoxy-D-xylulose-5-phosphate (DXP) and 3-amino-2-oxopropyl phosphate (1-amino-acetone-3-phosphate or AAP) to form pyridoxine 5'-phosphate (PNP) and inorganic phosphate. The sequence is that of Pyridoxine 5'-phosphate synthase from Shigella dysenteriae serotype 1 (strain Sd197).